The following is a 100-amino-acid chain: NADH-quinone oxidoreductase subunit K (100 aa).

Transmembrane regions (helical) follow at residues 1–21 (MIGL…GLAG), 28–48 (ILLL…GFIA), and 64–84 (FIIA…ILWF).

Belongs to the complex I subunit 4L family. In terms of assembly, NDH-1 is composed of 14 different subunits. Subunits NuoA, H, J, K, L, M, N constitute the membrane sector of the complex.

The protein resides in the cell inner membrane. The enzyme catalyses a quinone + NADH + 5 H(+)(in) = a quinol + NAD(+) + 4 H(+)(out). Its function is as follows. NDH-1 shuttles electrons from NADH, via FMN and iron-sulfur (Fe-S) centers, to quinones in the respiratory chain. The immediate electron acceptor for the enzyme in this species is believed to be ubiquinone. Couples the redox reaction to proton translocation (for every two electrons transferred, four hydrogen ions are translocated across the cytoplasmic membrane), and thus conserves the redox energy in a proton gradient. The chain is NADH-quinone oxidoreductase subunit K from Helicobacter acinonychis (strain Sheeba).